The following is a 3084-amino-acid chain: Highly reducing polyketide synthase sdnO (3084 aa).

In terms of domain architecture, Ketosynthase family 3 (KS3) spans 4 to 430; sequence PIPLAVVGIA…GTNAHAVLEK (427 aa). Catalysis depends on for beta-ketoacyl synthase activity residues C178, H313, and H353. The malonyl-CoA:ACP transacylase (MAT) domain stretch occupies residues 541–841; sequence FIFTGQGAQW…LAGPLRQSVA (301 aa). S632 serves as the catalytic For malonyltransferase activity. An N-terminal hotdog fold region spans residues 931-1071; that stretch reads HDLLGLRMTD…GSVLIDLVSS (141 aa). The interval 931–1243 is dehydratase (DH) domain; it reads HDLLGLRMTD…RSAEADMLVF (313 aa). Positions 931-1275 constitute a PKS/mFAS DH domain; it reads HDLLGLRMTD…LRSLAALDGA (345 aa). Catalysis depends on H963, which acts as the Proton acceptor; for dehydratase activity. Residues 1099-1275 are C-terminal hotdog fold; sequence LQPGEDIPPS…LRSLAALDGA (177 aa). The active-site Proton donor; for dehydratase activity is D1177. The interval 1733–2045 is enoylreductase (ER) domain; the sequence is GTAHAATFVE…RHENMTKYVV (313 aa). The catalytic ketoreductase (KRc) domain stretch occupies residues 2069–2252; the sequence is ATYVVAGGLG…YMALNIGLIE (184 aa). The Carrier domain maps to 2363-2440; it reads DIEAFAARAI…ALARKVTLRS (78 aa). The residue at position 2400 (S2400) is an O-(pantetheine 4'-phosphoryl)serine. The disordered stretch occupies residues 2445-2501; sequence GGAGGDASSTGNSESMARTPSDSSTVPTSIPATPSRSPSREPPAKETLTKSQQHLPI. The span at 2456-2481 shows a compositional bias: polar residues; that stretch reads NSESMARTPSDSSTVPTSIPATPSRS. Residues 2482–2492 are compositionally biased toward basic and acidic residues; that stretch reads PSREPPAKETL. The tract at residues 2864–3084 is choline/carnitine acyltransferase domain; the sequence is HFYSQLNRAF…LGVVRRVVEG (221 aa).

It functions in the pathway antibiotic biosynthesis. In terms of biological role, highly reducing polyketide synthase; part of the gene cluster that mediates the biosynthesis of sordarin and hypoxysordarin, glycoside antibiotics with a unique tetracyclic diterpene aglycone structure. First, the geranylgeranyl diphosphate synthase sdnC constructs GGDP from farnesyl diphosphate and isopentenyl diphosphate. The diterpene cyclase sdnA then catalyzes the cyclization of GGDP to afford cycloaraneosene. Cycloaraneosene is then hydroxylated four times by the putative cytochrome P450 monooxygenases sdnB, sdnE, sdnF and sdnH to give a hydroxylated cycloaraneosene derivative such as cycloaraneosene-8,9,13,19-tetraol. Although the order of the hydroxylations is unclear, at least C8, C9 and C13 of the cycloaraneosene skeleton are hydroxylated before the sordaricin formation. Dehydration of the 13-hydroxy group of the hydroxylated cycloaraneosene derivative might be catalyzed by an unassigned hypothetical protein such as sdnG and sdnP to construct the cyclopentadiene moiety. The FAD-dependent oxidoreductase sdnN is proposed to catalyze the oxidation at C9 of the hydroxylated cycloaraneosene derivative and also catalyze the Baeyer-Villiger oxidation to give the lactone intermediate. The presumed lactone intermediate would be hydrolyzed to give an acrolein moiety and a carboxylate moiety. Then, [4+2]cycloaddition would occur between the acrolein moiety and the cyclopentadiene moiety to give sordaricin. SdnN might also be involved in the [4+2]cycloaddition after the hypothesized oxidation to accommodate the oxidized product and prompt the [4+2]cycloaddition. GDP-6-deoxy-D-altrose may be biosynthesized from GDP-D-mannose by the putative GDP-mannose-4,6-dehydratase sdnI and the short-chain dehydrogenase sdnK. The glycosyltransferase sdnJ catalyzes the attachment of 6-deoxy-D-altrose onto the 19-hydroxy group of sordaricin to give 4'-O-demethylsordarin. The methyltransferase sdnD would complete the biosynthesis of sordarin. Sordarin can be further modified into hypoxysordarin. The unique acyl chain at the 3'-hydroxy group of hypoxysordarin would be constructed by an iterative type I PKS sdnO and the trans-acting polyketide methyltransferase sdnL. SdnL would be responsible for the introduction of an alpha-methyl group of the polyketide chain. Alternatively, the putative beta-lactamase-like sdnR might be responsible for the cleavage and transfer of the polyketide chain from the PKS sdnO to sordarin. Two putative cytochrome P450 monooxygenases, sdnQ and sdnT, might catalyze the epoxidations of the polyketide chain to complete the biosynthesis of hypoxysordarin. Transcriptional regulators sdnM and sdnS are presumably encoded for the transcriptional regulation of the expression of the sdn gene cluster. This is Highly reducing polyketide synthase sdnO from Sordaria araneosa (Pleurage araneosa).